A 577-amino-acid chain; its full sequence is Isocitrate dehydrogenase kinase/phosphatase (577 aa).

ATP is bound by residues 315 to 321 (APGIRGM) and lysine 336. Aspartate 371 is an active-site residue.

The protein belongs to the AceK family.

The protein localises to the cytoplasm. It catalyses the reaction L-seryl-[isocitrate dehydrogenase] + ATP = O-phospho-L-seryl-[isocitrate dehydrogenase] + ADP + H(+). Functionally, bifunctional enzyme which can phosphorylate or dephosphorylate isocitrate dehydrogenase (IDH) on a specific serine residue. This is a regulatory mechanism which enables bacteria to bypass the Krebs cycle via the glyoxylate shunt in response to the source of carbon. When bacteria are grown on glucose, IDH is fully active and unphosphorylated, but when grown on acetate or ethanol, the activity of IDH declines drastically concomitant with its phosphorylation. The protein is Isocitrate dehydrogenase kinase/phosphatase of Escherichia fergusonii (strain ATCC 35469 / DSM 13698 / CCUG 18766 / IAM 14443 / JCM 21226 / LMG 7866 / NBRC 102419 / NCTC 12128 / CDC 0568-73).